A 283-amino-acid polypeptide reads, in one-letter code: Pantothenate synthetase (283 aa).

Residue methionine 30–histidine 37 coordinates ATP. The active-site Proton donor is the histidine 37. Glutamine 61 lines the (R)-pantoate pocket. Residue glutamine 61 coordinates beta-alanine. An ATP-binding site is contributed by glycine 149–aspartate 152. Glutamine 155 lines the (R)-pantoate pocket. Residue leucine 186 to arginine 189 coordinates ATP.

Belongs to the pantothenate synthetase family. In terms of assembly, homodimer.

It localises to the cytoplasm. It catalyses the reaction (R)-pantoate + beta-alanine + ATP = (R)-pantothenate + AMP + diphosphate + H(+). It participates in cofactor biosynthesis; (R)-pantothenate biosynthesis; (R)-pantothenate from (R)-pantoate and beta-alanine: step 1/1. Its function is as follows. Catalyzes the condensation of pantoate with beta-alanine in an ATP-dependent reaction via a pantoyl-adenylate intermediate. The chain is Pantothenate synthetase from Escherichia coli O45:K1 (strain S88 / ExPEC).